The sequence spans 201 residues: dCTP deaminase, dUMP-forming (201 aa).

DCTP contacts are provided by residues 117–122, aspartate 135, 143–145, glutamine 163, tyrosine 177, and glutamine 188; these read RSSFGR and TLE. The active-site Proton donor/acceptor is glutamate 145.

Belongs to the dCTP deaminase family. In terms of assembly, homotrimer.

The enzyme catalyses dCTP + 2 H2O = dUMP + NH4(+) + diphosphate. Its pathway is pyrimidine metabolism; dUMP biosynthesis; dUMP from dCTP: step 1/1. In terms of biological role, bifunctional enzyme that catalyzes both the deamination of dCTP to dUTP and the hydrolysis of dUTP to dUMP without releasing the toxic dUTP intermediate. The chain is dCTP deaminase, dUMP-forming from Methanococcus aeolicus (strain ATCC BAA-1280 / DSM 17508 / OCM 812 / Nankai-3).